Reading from the N-terminus, the 342-residue chain is Transmembrane protein HWLF3 (342 aa).

The disordered stretch occupies residues 21–64 (PCSTSCPPSPAAPTLLRRRSLPQQRRRPSSSPNRRVRGVTTSPC). Over residues 36–48 (LRRRSLPQQRRRP) the composition is skewed to basic residues. A helical membrane pass occupies residues 119 to 139 (AIFIFQLAFSFGLGSVFWLGF). Residue Asn149 is glycosylated (N-linked (GlcNAc...) asparagine; by host). Residues 150 to 170 (YSFFLTVLVPIVCMFITYTLG) traverse the membrane as a helical segment. A glycan (N-linked (GlcNAc...) asparagine; by host) is linked at Asn176. 5 helical membrane-spanning segments follow: residues 177–197 (ATVL…FQMC), 202–222 (VLVG…GLAF), 231–251 (WKCI…LALL), 266–286 (AFSI…VIFF), and 296–316 (AVCL…MLSG). Asn330 carries N-linked (GlcNAc...) asparagine; by host glycosylation.

It belongs to the cytomegalovirus US12 family.

It is found in the membrane. The polypeptide is Transmembrane protein HWLF3 (US20) (Homo sapiens (Human)).